The chain runs to 259 residues: Thiazole synthase (259 aa).

Lys98 (schiff-base intermediate with DXP) is an active-site residue. 1-deoxy-D-xylulose 5-phosphate-binding positions include Gly159, 185–186, and 207–208; these read AG and NS.

This sequence belongs to the ThiG family. In terms of assembly, homotetramer. Forms heterodimers with either ThiH or ThiS.

The protein localises to the cytoplasm. It catalyses the reaction [ThiS sulfur-carrier protein]-C-terminal-Gly-aminoethanethioate + 2-iminoacetate + 1-deoxy-D-xylulose 5-phosphate = [ThiS sulfur-carrier protein]-C-terminal Gly-Gly + 2-[(2R,5Z)-2-carboxy-4-methylthiazol-5(2H)-ylidene]ethyl phosphate + 2 H2O + H(+). It functions in the pathway cofactor biosynthesis; thiamine diphosphate biosynthesis. In terms of biological role, catalyzes the rearrangement of 1-deoxy-D-xylulose 5-phosphate (DXP) to produce the thiazole phosphate moiety of thiamine. Sulfur is provided by the thiocarboxylate moiety of the carrier protein ThiS. In vitro, sulfur can be provided by H(2)S. In Chlorobaculum tepidum (strain ATCC 49652 / DSM 12025 / NBRC 103806 / TLS) (Chlorobium tepidum), this protein is Thiazole synthase.